The sequence spans 608 residues: Growth hormone receptor (608 aa).

The first 16 residues, 1–16 (MDLRHLLFTLALVCAN), serve as a signal peptide directing secretion. Topologically, residues 17–237 (DSLSASDDLL…EFVHCAEEIE (221 aa)) are extracellular. 2 disulfides stabilise this stretch: Cys-34-Cys-44 and Cys-72-Cys-83. A glycan (N-linked (GlcNAc...) asparagine) is linked at Asn-86. Cys-97 and Cys-111 are joined by a disulfide. Residues 122–226 (PPVHLNWTLL…ILYVSFTQAG (105 aa)) form the Fibronectin type-III domain. Residues Asn-127, Asn-132, and Asn-171 are each glycosylated (N-linked (GlcNAc...) asparagine). The WSXWS motif motif lies at 211-215 (FGEFS). The helical transmembrane segment at 238–261 (FPWFLVVVFGVCGLAVTAILILLS) threads the bilayer. Over 262–608 (KQPRLKMLIF…STDQLNKIMP (347 aa)) the chain is Cytoplasmic. Positions 267–352 (KMLIFPPVPV…HLKSHSCLGA (86 aa)) are required for JAK2 binding. Positions 270 to 278 (IFPPVPVPK) match the Box 1 motif motif. A UbE motif motif is present at residues 313–322 (DLWVEFIELD). 2 stretches are compositionally biased toward polar residues: residues 413–426 (ANTD…STQS) and 438–451 (STDS…TQLS). Positions 413–451 (ANTDTQQPHTSTQSESRESWPPFADSTDSANPSVQTQLS) are disordered.

Belongs to the type I cytokine receptor family. Type 1 subfamily. In terms of processing, on GH binding, proteolytically cleaved, in vitro, to produce GHBP. Broad specificity.

The protein localises to the cell membrane. It localises to the secreted. Functionally, receptor for pituitary gland growth hormone (GH1) involved in regulating postnatal body growth. On ligand binding, couples to the JAK2/STAT5 pathway. Its function is as follows. The soluble form (GHBP) acts as a reservoir of growth hormone in plasma and may be a modulator/inhibitor of GH signaling. The polypeptide is Growth hormone receptor (GHR) (Gallus gallus (Chicken)).